The following is a 563-amino-acid chain: Methylcrotonoyl-CoA carboxylase beta chain, mitochondrial (563 aa).

The transit peptide at 1–22 directs the protein to the mitochondrion; that stretch reads MWAVLRLALRPCARASPAGPRA. Positions 49-306 constitute a CoA carboxyltransferase N-terminal domain; the sequence is MKALVNQLHE…QKKLDVTIEP (258 aa). A carboxyltransferase region spans residues 49–555; it reads MKALVNQLHE…SAALNAPIEK (507 aa). Residue Lys-70 is modified to N6-acetyllysine; alternate. Position 70 is an N6-succinyllysine; alternate (Lys-70). Residue Lys-141 is modified to N6-succinyllysine. The CoA carboxyltransferase C-terminal domain maps to 309 to 555; sequence EPLFPADELY…SAALNAPIEK (247 aa). Residues 343–372 are acyl-CoA binding; it reads RFTEFKAFYGDTLVTGFARIFGYPVGIVGN. Lys-495 is modified (N6-acetyllysine; alternate). Lys-495 bears the N6-succinyllysine; alternate mark. Lys-511 bears the N6-acetyllysine mark.

It belongs to the AccD/PCCB family. In terms of assembly, probably a dodecamer composed of six biotin-containing alpha subunits (MCCC1) and six beta (MCCC2) subunits.

The protein resides in the mitochondrion matrix. The catalysed reaction is 3-methylbut-2-enoyl-CoA + hydrogencarbonate + ATP = 3-methyl-(2E)-glutaconyl-CoA + ADP + phosphate + H(+). It participates in amino-acid degradation; L-leucine degradation; (S)-3-hydroxy-3-methylglutaryl-CoA from 3-isovaleryl-CoA: step 2/3. In terms of biological role, carboxyltransferase subunit of the 3-methylcrotonyl-CoA carboxylase, an enzyme that catalyzes the conversion of 3-methylcrotonyl-CoA to 3-methylglutaconyl-CoA, a critical step for leucine and isovaleric acid catabolism. The sequence is that of Methylcrotonoyl-CoA carboxylase beta chain, mitochondrial (MCCC2) from Homo sapiens (Human).